The primary structure comprises 72 residues: Translation initiation factor IF-1 (72 aa).

Residues 1–72 enclose the S1-like domain; the sequence is MTKEDCIEMQ…SKGRIIFRSR (72 aa).

Belongs to the IF-1 family. In terms of assembly, component of the 30S ribosomal translation pre-initiation complex which assembles on the 30S ribosome in the order IF-2 and IF-3, IF-1 and N-formylmethionyl-tRNA(fMet); mRNA recruitment can occur at any time during PIC assembly.

The protein resides in the cytoplasm. Functionally, one of the essential components for the initiation of protein synthesis. Stabilizes the binding of IF-2 and IF-3 on the 30S subunit to which N-formylmethionyl-tRNA(fMet) subsequently binds. Helps modulate mRNA selection, yielding the 30S pre-initiation complex (PIC). Upon addition of the 50S ribosomal subunit IF-1, IF-2 and IF-3 are released leaving the mature 70S translation initiation complex. This Buchnera aphidicola subsp. Baizongia pistaciae (strain Bp) protein is Translation initiation factor IF-1.